Here is a 200-residue protein sequence, read N- to C-terminus: 7-methyl-GTP pyrophosphatase (200 aa).

Asp69 functions as the Proton acceptor in the catalytic mechanism.

Belongs to the Maf family. YceF subfamily. Requires a divalent metal cation as cofactor.

The protein resides in the cytoplasm. The enzyme catalyses N(7)-methyl-GTP + H2O = N(7)-methyl-GMP + diphosphate + H(+). Functionally, nucleoside triphosphate pyrophosphatase that hydrolyzes 7-methyl-GTP (m(7)GTP). May have a dual role in cell division arrest and in preventing the incorporation of modified nucleotides into cellular nucleic acids. The protein is 7-methyl-GTP pyrophosphatase of Colwellia psychrerythraea (strain 34H / ATCC BAA-681) (Vibrio psychroerythus).